Reading from the N-terminus, the 176-residue chain is Ribosome maturation factor RimP (176 aa).

Belongs to the RimP family.

It localises to the cytoplasm. Its function is as follows. Required for maturation of 30S ribosomal subunits. This chain is Ribosome maturation factor RimP, found in Chlorobium limicola (strain DSM 245 / NBRC 103803 / 6330).